The chain runs to 155 residues: Fibroblast growth factor 1 (155 aa).

Residue A2 is modified to N-acetylalanine. Positions 2–15 are excised as a propeptide; that stretch reads AEGETTTFRALTEK. N33 contributes to the heparin binding site. The tract at residues 127-143 is heparin-binding; the sequence is KKNGSSKLGPRTHFGQK.

The protein belongs to the heparin-binding growth factors family. In terms of assembly, monomer. Homodimer. Interacts with FGFR1, FGFR2, FGFR3 and FGFR4. Affinity between fibroblast growth factors (FGFs) and their receptors is increased by heparan sulfate glycosaminoglycans that function as coreceptors. Found in a complex with FGFBP1, FGF1 and FGF2. Interacts with FGFBP1. Part of a Cu(2+)-dependent multiprotein aggregate containing FGF1, S100A13 and SYT1. Interacts with SYT1. Interacts with S100A13. Interacts with LRRC59. Interacts with CSNKA, CSNKB and FIBP. While binding with LRRC59, CSNKA and FIBP seem mutually exclusive, CSNKB and FIBP may cooperatively interact with FGF1. Forms a ternary complex with FGFR1 and ITGAV:ITGB3 and induces the recruitment of PTPN11 to the complex. In the nucleus, phosphorylated by PKC/PRKCD.

Its subcellular location is the secreted. The protein resides in the cytoplasm. It is found in the cell cortex. The protein localises to the cytosol. It localises to the nucleus. Its function is as follows. Plays an important role in the regulation of cell survival, cell division, angiogenesis, cell differentiation and cell migration. Functions as a potent mitogen in vitro. Acts as a ligand for FGFR1 and integrins. Binds to FGFR1 in the presence of heparin leading to FGFR1 dimerization and activation via sequential autophosphorylation on tyrosine residues which act as docking sites for interacting proteins, leading to the activation of several signaling cascades. Binds to integrin ITGAV:ITGB3. Its binding to integrin, subsequent ternary complex formation with integrin and FGFR1, and the recruitment of PTPN11 to the complex are essential for FGF1 signaling. Induces the phosphorylation and activation of FGFR1, FRS2, MAPK3/ERK1, MAPK1/ERK2 and AKT1. Can induce angiogenesis. This is Fibroblast growth factor 1 (FGF1) from Ovis aries (Sheep).